We begin with the raw amino-acid sequence, 257 residues long: Aspartate/glutamate leucyltransferase (257 aa).

The protein belongs to the R-transferase family. Bpt subfamily.

It is found in the cytoplasm. The enzyme catalyses N-terminal L-glutamyl-[protein] + L-leucyl-tRNA(Leu) = N-terminal L-leucyl-L-glutamyl-[protein] + tRNA(Leu) + H(+). It catalyses the reaction N-terminal L-aspartyl-[protein] + L-leucyl-tRNA(Leu) = N-terminal L-leucyl-L-aspartyl-[protein] + tRNA(Leu) + H(+). Its function is as follows. Functions in the N-end rule pathway of protein degradation where it conjugates Leu from its aminoacyl-tRNA to the N-termini of proteins containing an N-terminal aspartate or glutamate. In Leptospira interrogans serogroup Icterohaemorrhagiae serovar copenhageni (strain Fiocruz L1-130), this protein is Aspartate/glutamate leucyltransferase.